The primary structure comprises 532 residues: Vesicular acetylcholine transporter unc-17 (532 aa).

The Cytoplasmic segment spans residues 1 to 31 (MGFNVPVINRDSEILKADAKKWLEQQDNQKK). A helical membrane pass occupies residues 32–52 (CVLVIVSIALLLDNMLYMVIV). Residues 53–101 (PIIPKYLRDIHNYQVTFEGYHNETSQLANGTYLVREVGGRINFLDEELE) lie on the Lumenal, vesicle side of the membrane. 2 N-linked (GlcNAc...) asparagine glycosylation sites follow: asparagine 74 and asparagine 81. Residues 102–121 (LGWLFASKALLQIFVNPFSG) traverse the membrane as a helical segment. At 122-130 (YIIDRVGYE) the chain is on the cytoplasmic side. The chain crosses the membrane as a helical span at residues 131 to 151 (IPMILGLCTMFFSTAIFALGK). The Lumenal, vesicle portion of the chain corresponds to 152-160 (SYGVLLFAR). A helical transmembrane segment spans residues 161–180 (SLQGFGSAFADTSGLAMIAD). The Cytoplasmic portion of the chain corresponds to 181-191 (RFTEENERSAA). A helical membrane pass occupies residues 192–213 (LGIALAFISFGCLVAPPFGSVL). Residues 214–219 (YSLAGK) lie on the Lumenal, vesicle side of the membrane. A helical membrane pass occupies residues 220–242 (PVPFLILSFVCLADAIAVFMVIN). Residues 243–266 (PHRRGTDSHGEKVQGTPMWRLFMD) are Cytoplasmic-facing. Residues 267-286 (PFIACCSGALIMANVSLAFL) form a helical membrane-spanning segment. Residues 287-303 (EPTITTWMSEMMPDTPG) lie on the Lumenal, vesicle side of the membrane. A helical transmembrane segment spans residues 304–328 (WLVGVIWLPPFFPHVLGVYVTVKML). Over 329-335 (RAFPHHT) the chain is Cytoplasmic. A helical membrane pass occupies residues 336–356 (WAIAMVGLAMEGIACFAIPYT). Over 357–367 (TSVMQLVIPLS) the chain is Lumenal, vesicle. Residues 368–388 (FVCFGIALIDTSLLPMLGHLV) traverse the membrane as a helical segment. Topologically, residues 389-393 (DTRHV) are cytoplasmic. The helical transmembrane segment at 394–412 (SVYGSVYAIADISYSLAYA) threads the bilayer. At 413–418 (FGPIIA) the chain is on the lumenal, vesicle side. A helical transmembrane segment spans residues 419–440 (GWIVTNWGFTALNIIIFATNVT). Residues 441–532 (YAPVLFLLRK…AGYDPLNPQW (92 aa)) lie on the Cytoplasmic side of the membrane.

Belongs to the major facilitator superfamily. Vesicular transporter family. As to expression, detected in most regions of the nervous system including the nerve ring, the ventral and dorsal nerve cords, and the pharyngeal nervous system. Expressed in most cholinergic neurons. In addition, expressed in SIA, SIB and SMB sublateral motor neurons.

It localises to the cytoplasmic vesicle. The protein localises to the secretory vesicle. It is found in the synaptic vesicle membrane. Involved in acetylcholine transport into synaptic vesicles. The chain is Vesicular acetylcholine transporter unc-17 from Caenorhabditis elegans.